The primary structure comprises 295 residues: Nucleotide-binding protein YvcJ (295 aa).

16–23 (GMSGAGKT) is an ATP binding site. Position 67–70 (67–70 (DLRG)) interacts with GTP.

The protein belongs to the RapZ-like family.

Displays ATPase and GTPase activities. Can also hydrolyze pNPP. May affect the expression of competence via the phosphorylation of a cellular component. The sequence is that of Nucleotide-binding protein YvcJ (yvcJ) from Bacillus subtilis (strain 168).